A 712-amino-acid chain; its full sequence is Nucleolin (712 aa).

The segment at 1 to 305 is disordered; it reads MVKLAKAGKN…KKQKVEGTEP (305 aa). Residues Lys9, Lys15, and Lys16 each carry the N6-acetyllysine modification. Positions 24–43 are enriched in acidic residues; the sequence is VEEDSEDEEMSEDEEDDSSG. Phosphoserine is present on residues Ser28, Ser34, Ser41, and Ser42. The segment covering 56 to 107 has biased composition (low complexity); that stretch reads AAATSAKKVVVSPTKKVAVATPAKKAAVTPGKKAAATPAKKTVTPAKAVTTP. Repeat 1 spans residues 58–65; that stretch reads ATSAKKVV. Residues 58-135 form an 8 X 8 AA tandem repeats of X-T-P-X-K-K-X-X region; sequence ATSAKKVVVS…GAAIPAKGAK (78 aa). Ser67 carries the phosphoserine modification. A phosphothreonine mark is found at Thr69, Thr76, Thr84, and Thr92. 3 consecutive repeat copies span residues 75 to 82, 83 to 90, and 91 to 98. Lys96 bears the N6-acetyllysine mark. Thr99 carries the phosphothreonine modification. One copy of the 5; truncated repeat lies at 99–104; sequence TPAKAV. Position 102 is an N6-acetyllysine (Lys102). Copy 6 of the repeat occupies 105-112; that stretch reads TTPGKKGA. At Thr106 the chain carries Phosphothreonine. An N6-acetyllysine modification is found at Lys109. A Phosphothreonine modification is found at Thr113. Lys116 carries the post-translational modification N6-acetyllysine. 2 repeat units span residues 120-127 and 128-135. Thr121 is subject to Phosphothreonine. Low complexity predominate over residues 122-137; sequence PGKKGAAIPAKGAKNG. Lys124 carries the post-translational modification N6-acetyllysine. Phosphoserine occurs at positions 145 and 153. Residues 145–171 are compositionally biased toward acidic residues; that stretch reads SDEEEEDDSEEDEDDDEDEDEDEDEIE. Over residues 172-183 the composition is skewed to low complexity; the sequence is PAAMKAAAAAPA. A phosphoserine mark is found at Ser184 and Ser206. The segment covering 184-211 has biased composition (acidic residues); that stretch reads SEDEDDEDDEDDEDEDDDEEDDSEEEAM. Thr214 carries the phosphothreonine modification. The span at 234-274 shows a compositional bias: acidic residues; sequence EDEDEEEDDEDEDDDDDDDDDDEDDEDEDDEEEEEEEEEEP. Residues 275–302 are compositionally biased toward basic and acidic residues; the sequence is VKEAPGKRKKEMAKQKAAPEAKKQKVEG. Lys299 participates in a covalent cross-link: Glycyl lysine isopeptide (Lys-Gly) (interchain with G-Cter in SUMO1); alternate. Residue Lys299 forms a Glycyl lysine isopeptide (Lys-Gly) (interchain with G-Cter in SUMO2); alternate linkage. Thr303 is subject to Phosphothreonine. 2 RRM domains span residues 309 to 385 and 395 to 468; these read FNLF…KPKG and RTLL…YTGE. N6-acetyllysine is present on Lys320. Lys326 is covalently cross-linked (Glycyl lysine isopeptide (Lys-Gly) (interchain with G-Cter in SUMO1); alternate). Residue Lys326 forms a Glycyl lysine isopeptide (Lys-Gly) (interchain with G-Cter in SUMO2); alternate linkage. Residue Lys350 is modified to N6-acetyllysine. At Ser358 the chain carries Phosphoserine. Phosphothreonine is present on Thr369. Residue Lys372 forms a Glycyl lysine isopeptide (Lys-Gly) (interchain with G-Cter in SUMO2) linkage. Lys379 is covalently cross-linked (Glycyl lysine isopeptide (Lys-Gly) (interchain with G-Cter in SUMO2); alternate). Lys379 is subject to N6-acetyllysine; alternate. N6-acetyllysine occurs at positions 400 and 405. At Thr407 the chain carries Phosphothreonine. Lys429 and Lys446 each carry N6-acetyllysine. Ser460 and Ser462 each carry phosphoserine. N6-acetyllysine occurs at positions 469 and 479. The RRM 3 domain maps to 488 to 562; it reads KTLVLSNLSY…RAIRLELQGP (75 aa). Lys515 participates in a covalent cross-link: Glycyl lysine isopeptide (Lys-Gly) (interchain with G-Cter in SUMO2); alternate. Position 515 is an N6-acetyllysine; alternate (Lys515). The residue at position 523 (Lys523) is an N6-acetyllysine. A Phosphoserine modification is found at Ser565. Lys574 is subject to N6-acetyllysine. The 76-residue stretch at 574 to 649 folds into the RRM 4 domain; that stretch reads KTLFVKGLSE…NKVTLDWAKP (76 aa). Lys579 participates in a covalent cross-link: Glycyl lysine isopeptide (Lys-Gly) (interchain with G-Cter in SUMO2); alternate. An N6-acetyllysine; alternate modification is found at Lys579. The residue at position 582 (Ser582) is a Phosphoserine. Residue Lys591 forms a Glycyl lysine isopeptide (Lys-Gly) (interchain with G-Cter in SUMO1); alternate linkage. Lys591 participates in a covalent cross-link: Glycyl lysine isopeptide (Lys-Gly) (interchain with G-Cter in SUMO2); alternate. Phosphoserine occurs at positions 593 and 621. Lys626 participates in a covalent cross-link: Glycyl lysine isopeptide (Lys-Gly) (interchain with G-Cter in SUMO2). The disordered stretch occupies residues 642–712; sequence VTLDWAKPKG…KPQGKKTKFE (71 aa). Residue Lys648 is modified to N6-acetyllysine. Over residues 652–698 the composition is skewed to gly residues; sequence EGGFGGRGGGRGGFGGRGGGRGGRGGFGGRGRGGFGGRGGFRGGRGG. Arg658, Arg662, Arg668, Arg672, Arg675, Arg681, Arg683, Arg689, and Arg693 each carry asymmetric dimethylarginine. At Arg696 the chain carries Asymmetric dimethylarginine; alternate. Omega-N-methylarginine; alternate is present on Arg696. Over residues 699 to 712 the composition is skewed to basic and acidic residues; it reads GGDHKPQGKKTKFE.

In terms of assembly, identified in a IGF2BP1-dependent mRNP granule complex containing untranslated mRNAs. Component of the SWAP complex that consists of NPM1, NCL/nucleolin, PARP1 and SWAP70. Component of a complex which is at least composed of HTATSF1/Tat-SF1, the P-TEFb complex components CDK9 and CCNT1, RNA polymerase II, SUPT5H, and NCL/nucleolin. Interacts with AICDA. Interacts with APTX. Interacts with C1QBP. Interacts with ERBB4. Interacts (via C-terminus) with FMR1 isoform 6 (via N-terminus). Interacts with GZF1; this interaction is important for nucleolar localization of GZF1. Interacts with NSUN2. Interacts with NVL. Interacts (via N-terminus domain) with SETX. Interacts (via RRM1 and C-terminal RRM4/Arg/Gly-rich domains) with TERT; the interaction is important for nucleolar localization of TERT. Interacts with WDR46. Interacts with ZFP36. Interacts with LRRC34. Interacts with RRP1B. Interacts with HNRNPU; this interaction occurs during mitosis. Interacts with RIOK1; RIOK1 recruits NCL to the PRMT5 for symmetrically methylation. Interacts with ZBTB7B. Interacts with MDK; this interaction promotes NCL clustering and lateral movements of this complex into lipid rafts leading to MDK internalization. Interacts with HDGF. Interacts with ALKBH2. Interacts with IGFBP5; this interaction is necessary for IGFBP5 localization to the nucleus. Interacts with DDX24 (when ubiquitinated); this interaction may be important during ribosome biogenesis. In terms of processing, some glutamate residues are glycylated by TTLL8. This modification occurs exclusively on glutamate residues and results in a glycine chain on the gamma-carboxyl group. Symmetrically methylated by PRMT5.

It is found in the nucleus. Its subcellular location is the nucleolus. The protein resides in the cytoplasm. In terms of biological role, nucleolin is the major nucleolar protein of growing eukaryotic cells. It is found associated with intranucleolar chromatin and pre-ribosomal particles. It induces chromatin decondensation by binding to histone H1. It is thought to play a role in pre-rRNA transcription and ribosome assembly. May play a role in the process of transcriptional elongation. Binds RNA oligonucleotides with 5'-UUAGGG-3' repeats more tightly than the telomeric single-stranded DNA 5'-TTAGGG-3' repeats. This chain is Nucleolin (NCL), found in Pongo abelii (Sumatran orangutan).